A 239-amino-acid chain; its full sequence is Flagellin B3 (239 aa).

A propeptide spanning residues 1–11 (MLKNFMKNKKG) is cleaved from the precursor. 2 N-linked (GlcNAc...) asparagine glycosylation sites follow: N115 and N128.

This sequence belongs to the archaeal flagellin family. In terms of processing, N-linked glycans consist of the 779 Da trisaccharide beta-ManNAc(Thr)-(1-4)-beta-GlcNAc3NAcA-(1-3)-beta-GlcNAc.

The protein resides in the archaeal flagellum. Its function is as follows. Flagellin is the subunit protein which polymerizes to form the filaments of archaeal flagella. The sequence is that of Flagellin B3 (flaB3) from Methanococcus voltae.